Here is a 48-residue protein sequence, read N- to C-terminus: Large ribosomal subunit protein bL34c (48 aa).

Positions 18-48 (SGFRSRMATPQGRKTIRNRRKKGRKNLTLRR) are disordered. The span at 31-48 (KTIRNRRKKGRKNLTLRR) shows a compositional bias: basic residues.

It belongs to the bacterial ribosomal protein bL34 family.

It localises to the plastid. It is found in the chloroplast. In Phaeodactylum tricornutum (strain CCAP 1055/1), this protein is Large ribosomal subunit protein bL34c.